Consider the following 517-residue polypeptide: Bifunctional purine biosynthesis protein PurH (517 aa).

The region spanning 1–145 (MSPLALVSVS…KNHKDVSVLV (145 aa)) is the MGS-like domain.

The protein belongs to the PurH family.

It carries out the reaction (6R)-10-formyltetrahydrofolate + 5-amino-1-(5-phospho-beta-D-ribosyl)imidazole-4-carboxamide = 5-formamido-1-(5-phospho-D-ribosyl)imidazole-4-carboxamide + (6S)-5,6,7,8-tetrahydrofolate. The enzyme catalyses IMP + H2O = 5-formamido-1-(5-phospho-D-ribosyl)imidazole-4-carboxamide. Its pathway is purine metabolism; IMP biosynthesis via de novo pathway; 5-formamido-1-(5-phospho-D-ribosyl)imidazole-4-carboxamide from 5-amino-1-(5-phospho-D-ribosyl)imidazole-4-carboxamide (10-formyl THF route): step 1/1. It participates in purine metabolism; IMP biosynthesis via de novo pathway; IMP from 5-formamido-1-(5-phospho-D-ribosyl)imidazole-4-carboxamide: step 1/1. This Prochlorococcus marinus (strain MIT 9301) protein is Bifunctional purine biosynthesis protein PurH.